An 874-amino-acid polypeptide reads, in one-letter code: Mannuronan C5-epimerase AlgE6 (874 aa).

PbH1 repeat units lie at residues 133 to 155 (DRNVTIERVEVREMSGYGFDPHE), 157 to 179 (TINLVLRDSVAHHNGLDGFVADY), 180 to 202 (QIGGTFENNVAYANDRHGFNIVT), 204 to 226 (TNDFVMRNNVAYGNGGNGLVVQR), 234 to 256 (PENILIDGGSYYDNGLEGVLVKM), 257 to 279 (SNNVTVQNADIHGNGSSGVRVYG), 280 to 302 (AQGVQILGNQIHDNAKTAVAPEV), and 320 to 351 (TLNTRVEGNTITGSANSTYGVQERNDGTDFSS). Hemolysin-type calcium-binding repeat units lie at residues 383–394 (GTDGNDVLIGSD), 401–417 (GGAGDDRLDGGAGDDLL), 419–435 (GGAGRDRLTGGLGADTF), 562–578 (GGGGADQLYGYGGGDLL), 580–596 (GGAGRDRLTGGEGADTF), 723–739 (GGGGADQLYGYAGNDLL), and 741–757 (GGAGRDKLSGGEGADTF). The interval 401–420 (GGAGDDRLDGGAGDDLLDGG) is disordered.

This sequence belongs to the D-mannuronate C5-epimerase family. Requires Ca(2+) as cofactor.

The protein resides in the secreted. The catalysed reaction is [(1-&gt;4)-beta-D-mannuronosyl](n) = [alginate](n). Its pathway is glycan biosynthesis; alginate biosynthesis. Its activity is regulated as follows. Inhibited by zinc. Its function is as follows. Converts beta-D-mannuronic acid (M) to alpha-L-guluronic acid (G), producing a polymer with gel-forming capacity, required for the formation of the cyst coat. This chain is Mannuronan C5-epimerase AlgE6, found in Azotobacter vinelandii.